The chain runs to 245 residues: Flavin-dependent thymidylate synthase (245 aa).

A ThyX domain is found at 5-210 (IRVKLVNYTK…ELRPIIKWAK (206 aa)). Residues Ser59, 83-85 (RHR), and Gln91 contribute to the FAD site. DUMP contacts are provided by residues 80–83 (QLVR), 91–95 (QQSQR), and Arg149. The ThyX motif signature appears at 83 to 93 (RHRLASYTQQS). FAD is bound by residues 165–167 (NLR) and His171. Arg176 lines the dUMP pocket. The active-site Involved in ionization of N3 of dUMP, leading to its activation is Arg176.

Belongs to the thymidylate synthase ThyX family. In terms of assembly, homotetramer. It depends on FAD as a cofactor.

It carries out the reaction dUMP + (6R)-5,10-methylene-5,6,7,8-tetrahydrofolate + NADPH + H(+) = dTMP + (6S)-5,6,7,8-tetrahydrofolate + NADP(+). The protein operates within pyrimidine metabolism; dTTP biosynthesis. In terms of biological role, catalyzes the reductive methylation of 2'-deoxyuridine-5'-monophosphate (dUMP) to 2'-deoxythymidine-5'-monophosphate (dTMP) while utilizing 5,10-methylenetetrahydrofolate (mTHF) as the methyl donor, and NADPH and FADH(2) as the reductant. This is Flavin-dependent thymidylate synthase from Thermococcus kodakarensis (strain ATCC BAA-918 / JCM 12380 / KOD1) (Pyrococcus kodakaraensis (strain KOD1)).